The following is a 561-amino-acid chain: Arginine--tRNA ligase (561 aa).

The 'HIGH' region motif lies at 128 to 138; it reads ANPTGPLHVGH.

This sequence belongs to the class-I aminoacyl-tRNA synthetase family. As to quaternary structure, monomer.

It is found in the cytoplasm. It catalyses the reaction tRNA(Arg) + L-arginine + ATP = L-arginyl-tRNA(Arg) + AMP + diphosphate. This Chromohalobacter salexigens (strain ATCC BAA-138 / DSM 3043 / CIP 106854 / NCIMB 13768 / 1H11) protein is Arginine--tRNA ligase.